The following is a 110-amino-acid chain: MQAALEVTARYCSRELDQYGQCVAAKPESWHRDCHHLKMSIARCTSSHPIIRQIRQACAEPFEAFEKCLRLNEAAVGNCAEHMRRFLQCAEQVQPPSSPTTGEAQPLPAS.

Position 1 is an N-acetylmethionine (Met-1). CHCH domains follow at residues 9-52 (ARYC…PIIR) and 55-97 (RQAC…QPPS). 4 short sequence motifs (cx9C motif) span residues 12–22 (CSRELDQYGQC), 34–44 (CHHLKMSIARC), 58–68 (CAEPFEAFEKC), and 79–89 (CAEHMRRFLQC). Disulfide bonds link Cys-12-Cys-44, Cys-22-Cys-34, Cys-58-Cys-89, and Cys-68-Cys-79.

Monomer.

Its subcellular location is the mitochondrion intermembrane space. In Mus musculus (Mouse), this protein is Coiled-coil-helix-coiled-coil-helix domain-containing protein 5 (Chchd5).